The sequence spans 258 residues: MSSLLDKTRMLNRILQKSGTEPVDFEDICDLLSDVLACNVYIISRKGKILGSKFYSGFECDEVREVVLKENRFPDFYNNKLLNVNETLSNSPNHDKCVFDNLKDCSINNKLSTIVPINGNRERLGTLLLARFDKEFTDEDLVLAEYSATIIGLEILRSKQDQIEEEARKKAVVQLAIGTLSYSELEAVEHIFNELDGTEGLLVASKIADKVGITRSVIVNALRKFESAGVIESRSLGMKGTHIRILNDKLLEELKKIK.

Residues 1–156 (MSSLLDKTRM…SATIIGLEIL (156 aa)) are GAF domain. The H-T-H motif DNA-binding region spans 204–223 (ASKIADKVGITRSVIVNALR).

This sequence belongs to the CodY family.

It is found in the cytoplasm. In terms of biological role, DNA-binding global transcriptional regulator which is involved in the adaptive response to starvation and acts by directly or indirectly controlling the expression of numerous genes in response to nutrient availability. During rapid exponential growth, CodY is highly active and represses genes whose products allow adaptation to nutrient depletion. This Clostridium botulinum (strain ATCC 19397 / Type A) protein is Global transcriptional regulator CodY.